The sequence spans 320 residues: Formimidoylglutamase (320 aa).

Mn(2+)-binding residues include histidine 125, aspartate 153, histidine 155, aspartate 157, aspartate 244, and aspartate 246.

Belongs to the arginase family. The cofactor is Mn(2+).

The enzyme catalyses N-formimidoyl-L-glutamate + H2O = formamide + L-glutamate. Its pathway is amino-acid degradation; L-histidine degradation into L-glutamate; L-glutamate from N-formimidoyl-L-glutamate (hydrolase route): step 1/1. Catalyzes the conversion of N-formimidoyl-L-glutamate to L-glutamate and formamide. This is Formimidoylglutamase from Rhodococcus opacus (strain B4).